The following is a 691-amino-acid chain: Protein 4.2 (691 aa).

Glycine 2 carries N-myristoyl glycine lipidation. Residues 31–39 (LTLRRGQSF) are band 3 binding. The residue at position 248 (serine 248) is a Phosphoserine. Tyrosine 570 is modified (phosphotyrosine).

The protein belongs to the transglutaminase superfamily. Transglutaminase family. In terms of assembly, component of the ankyrin-1 complex in the erythrocyte, composed of ANK1, RHCE, RHAG, SLC4A1, EPB42, GYPA, GYPB and AQP1. Interacts with SLC4A1 (via the cytoplasmic domain); this interaction is mediated by the SLC4A1 Band 3-I dimer. Interacts with ANK1 (via ANK 1-13 repeats). Interacts with AQP1 (via the C-terminal).

The protein localises to the cell membrane. It is found in the cytoplasm. Its subcellular location is the cytoskeleton. Component of the ankyrin-1 complex, a multiprotein complex involved in the stability and shape of the erythrocyte membrane. This Mus musculus (Mouse) protein is Protein 4.2.